A 236-amino-acid chain; its full sequence is Orotidine 5'-phosphate decarboxylase (236 aa).

Residues Asp-14, Lys-36, 63–72, Thr-122, Arg-183, Gln-192, Gly-212, and Arg-213 each bind substrate; that span reads DLKYHDIPNT. Lys-65 functions as the Proton donor in the catalytic mechanism.

It belongs to the OMP decarboxylase family. Type 1 subfamily. In terms of assembly, homodimer.

The catalysed reaction is orotidine 5'-phosphate + H(+) = UMP + CO2. The protein operates within pyrimidine metabolism; UMP biosynthesis via de novo pathway; UMP from orotate: step 2/2. In terms of biological role, catalyzes the decarboxylation of orotidine 5'-monophosphate (OMP) to uridine 5'-monophosphate (UMP). This is Orotidine 5'-phosphate decarboxylase from Halorhodospira halophila (strain DSM 244 / SL1) (Ectothiorhodospira halophila (strain DSM 244 / SL1)).